Consider the following 508-residue polypeptide: Cobyric acid synthase (508 aa).

Positions 266–464 constitute a GATase cobBQ-type domain; it reads SLRIAVVAYP…AHGLFESTEV (199 aa). Cys-347 serves as the catalytic Nucleophile. His-456 is a catalytic residue.

Belongs to the CobB/CobQ family. CobQ subfamily.

It functions in the pathway cofactor biosynthesis; adenosylcobalamin biosynthesis. Catalyzes amidations at positions B, D, E, and G on adenosylcobyrinic A,C-diamide. NH(2) groups are provided by glutamine, and one molecule of ATP is hydrogenolyzed for each amidation. In Methylibium petroleiphilum (strain ATCC BAA-1232 / LMG 22953 / PM1), this protein is Cobyric acid synthase.